The primary structure comprises 253 residues: Imidazole glycerol phosphate synthase subunit HisF (253 aa).

Active-site residues include D11 and D130.

It belongs to the HisA/HisF family. Heterodimer of HisH and HisF.

It localises to the cytoplasm. It carries out the reaction 5-[(5-phospho-1-deoxy-D-ribulos-1-ylimino)methylamino]-1-(5-phospho-beta-D-ribosyl)imidazole-4-carboxamide + L-glutamine = D-erythro-1-(imidazol-4-yl)glycerol 3-phosphate + 5-amino-1-(5-phospho-beta-D-ribosyl)imidazole-4-carboxamide + L-glutamate + H(+). Its pathway is amino-acid biosynthesis; L-histidine biosynthesis; L-histidine from 5-phospho-alpha-D-ribose 1-diphosphate: step 5/9. IGPS catalyzes the conversion of PRFAR and glutamine to IGP, AICAR and glutamate. The HisF subunit catalyzes the cyclization activity that produces IGP and AICAR from PRFAR using the ammonia provided by the HisH subunit. This chain is Imidazole glycerol phosphate synthase subunit HisF, found in Dinoroseobacter shibae (strain DSM 16493 / NCIMB 14021 / DFL 12).